A 343-amino-acid polypeptide reads, in one-letter code: Mating-type protein MAT-2 (343 aa).

2 disordered regions span residues 98 to 117 (RSPQ…SEQT) and 177 to 223 (KKPW…AAMT). The span at 99–117 (SPQVVSSPQSAQTSPSEQT) shows a compositional bias: low complexity. The segment at residues 131-199 (APRPMNCWII…EHLRQHPNYK (69 aa)) is a DNA-binding region (HMG box). Over residues 206–218 (GEKKKRQSRKSKR) the composition is skewed to basic residues.

It is found in the nucleus. This is Mating-type protein MAT-2 (MAT2) from Cochliobolus heterostrophus (Southern corn leaf blight fungus).